The following is a 376-amino-acid chain: CYP enzymes assisting alcohol dehydrogenase (376 aa).

Residues Cys43, Thr45, His64, Cys94, Cys97, Cys100, Cys108, and Cys173 each contribute to the Zn(2+) site. Thr45 contributes to the NAD(+) binding site. 2 residues coordinate substrate: Thr45 and His64. Residues 199 to 204 (GLGAVG), Asp223, Lys228, 294 to 296 (LGA), Phe320, and Lys371 each bind NAD(+).

Belongs to the zinc-containing alcohol dehydrogenase family. Class-III subfamily. As to quaternary structure, homodimer. Zn(2+) serves as cofactor.

The protein operates within alkaloid biosynthesis. Functionally, may be a positive catalyzer of strictosidine production by assisting secologanin biosynthesis, thus being involved in monoterpene indole alkaloids accumulation. The chain is CYP enzymes assisting alcohol dehydrogenase from Catharanthus roseus (Madagascar periwinkle).